A 745-amino-acid polypeptide reads, in one-letter code: Catalase-peroxidase (745 aa).

The segment at residues 97 to 223 is a cross-link (tryptophyl-tyrosyl-methioninium (Trp-Tyr) (with M-249)); it reads WHSAGTYRTG…LAAVQMGLIY (127 aa). The active-site Proton acceptor is the histidine 98. Positions 223-249 form a cross-link, tryptophyl-tyrosyl-methioninium (Tyr-Met) (with W-97); that stretch reads YVNPEGPDGSPDPWASARDIRMTFARM. Histidine 264 serves as a coordination point for heme b. The interval 345–368 is disordered; the sequence is KQWQPVNPKPEDLAPGAHSPDRRV.

Belongs to the peroxidase family. Peroxidase/catalase subfamily. As to quaternary structure, homodimer or homotetramer. The cofactor is heme b. In terms of processing, formation of the three residue Trp-Tyr-Met cross-link is important for the catalase, but not the peroxidase activity of the enzyme.

The catalysed reaction is H2O2 + AH2 = A + 2 H2O. It carries out the reaction 2 H2O2 = O2 + 2 H2O. Bifunctional enzyme with both catalase and broad-spectrum peroxidase activity. The chain is Catalase-peroxidase from Phenylobacterium zucineum (strain HLK1).